Reading from the N-terminus, the 136-residue chain is Ribosome-binding factor A (136 aa).

Positions 1–22 are disordered; the sequence is MNTAGPAGKLAGHAASGPTQRQ.

The protein belongs to the RbfA family. In terms of assembly, monomer. Binds 30S ribosomal subunits, but not 50S ribosomal subunits or 70S ribosomes.

The protein resides in the cytoplasm. Its function is as follows. One of several proteins that assist in the late maturation steps of the functional core of the 30S ribosomal subunit. Associates with free 30S ribosomal subunits (but not with 30S subunits that are part of 70S ribosomes or polysomes). Required for efficient processing of 16S rRNA. May interact with the 5'-terminal helix region of 16S rRNA. This chain is Ribosome-binding factor A, found in Gluconacetobacter diazotrophicus (strain ATCC 49037 / DSM 5601 / CCUG 37298 / CIP 103539 / LMG 7603 / PAl5).